Reading from the N-terminus, the 477-residue chain is ATP synthase subunit beta (477 aa).

148 to 155 (GGAGVGKT) serves as a coordination point for ATP.

It belongs to the ATPase alpha/beta chains family. As to quaternary structure, F-type ATPases have 2 components, CF(1) - the catalytic core - and CF(0) - the membrane proton channel. CF(1) has five subunits: alpha(3), beta(3), gamma(1), delta(1), epsilon(1). CF(0) has three main subunits: a(1), b(2) and c(9-12). The alpha and beta chains form an alternating ring which encloses part of the gamma chain. CF(1) is attached to CF(0) by a central stalk formed by the gamma and epsilon chains, while a peripheral stalk is formed by the delta and b chains.

The protein localises to the cell inner membrane. The enzyme catalyses ATP + H2O + 4 H(+)(in) = ADP + phosphate + 5 H(+)(out). Functionally, produces ATP from ADP in the presence of a proton gradient across the membrane. The catalytic sites are hosted primarily by the beta subunits. The chain is ATP synthase subunit beta from Psychrobacter arcticus (strain DSM 17307 / VKM B-2377 / 273-4).